The following is a 469-amino-acid chain: MALTIYQHSSSLTSHLQTVHQTQVQFRKFVGITKVWDAQVRDKKLLALAHTEIIVRLSDPSAIPKLESVRIASGHINHPSVTFVTDPEKCPLCTNPSVSSSKSLSDLPTSGVVLKLRDLNLKSPLQMNDVILETGVTGLDIEAHILGRHYPHLAIILLGGVEHLVNIQTTTLTQHYQDLTLNLFGTTYKAGYLNSLRTISSEQEQPVYNGPGIRTLVPNGHVIIPNTPPPAQINQAASQGVITYQQSRDDNEDPFTTHHFRPDDGSDFPQSEHTNVPALVLSPSPSAMPPVESSNTRDQQTNAASAFTPIEPESRVADWSEDFDSAQMDQNLTPPQPPAPASTPEDTDSTARQPQVTPTRVPNTVTATSASTPASTSQIQFGDRSPVTMTQHTLRAPPPPPQPTNRNITPDFLRPRPTDVPSSNFNHLAILRNPTDQALTDRLNALAGLVNAGVLDPQECREILQTLKN.

2 disordered regions span residues 248 to 314 and 327 to 418; these read RDDN…EPES and QMDQ…PRPT. Polar residues-rich tracts occupy residues 292–305 and 350–365; these read ESSNTRDQQTNAAS and TARQPQVTPTRVPNTV. The segment covering 366-377 has biased composition (low complexity); sequence TATSASTPASTS.

This is an uncharacterized protein from Cryphonectria parasitica (Chestnut blight fungus).